We begin with the raw amino-acid sequence, 294 residues long: Probable 2-(5''-triphosphoribosyl)-3'-dephosphocoenzyme-A synthase (294 aa).

This sequence belongs to the CitG/MdcB family.

It carries out the reaction 3'-dephospho-CoA + ATP = 2'-(5''-triphospho-alpha-D-ribosyl)-3'-dephospho-CoA + adenine. This Streptococcus equi subsp. zooepidemicus (strain H70) protein is Probable 2-(5''-triphosphoribosyl)-3'-dephosphocoenzyme-A synthase.